The sequence spans 233 residues: 5'-methylthioadenosine/S-adenosylhomocysteine nucleosidase (233 aa).

The Proton acceptor role is filled by Glu-12. Residues Gly-78, Ile-156, and 177–178 each bind substrate; that span reads ME. Asp-201 serves as the catalytic Proton donor.

Belongs to the PNP/UDP phosphorylase family. MtnN subfamily.

The enzyme catalyses S-adenosyl-L-homocysteine + H2O = S-(5-deoxy-D-ribos-5-yl)-L-homocysteine + adenine. The catalysed reaction is S-methyl-5'-thioadenosine + H2O = 5-(methylsulfanyl)-D-ribose + adenine. It carries out the reaction 5'-deoxyadenosine + H2O = 5-deoxy-D-ribose + adenine. Its pathway is amino-acid biosynthesis; L-methionine biosynthesis via salvage pathway; S-methyl-5-thio-alpha-D-ribose 1-phosphate from S-methyl-5'-thioadenosine (hydrolase route): step 1/2. Catalyzes the irreversible cleavage of the glycosidic bond in both 5'-methylthioadenosine (MTA) and S-adenosylhomocysteine (SAH/AdoHcy) to adenine and the corresponding thioribose, 5'-methylthioribose and S-ribosylhomocysteine, respectively. Also cleaves 5'-deoxyadenosine, a toxic by-product of radical S-adenosylmethionine (SAM) enzymes, into 5-deoxyribose and adenine. The polypeptide is 5'-methylthioadenosine/S-adenosylhomocysteine nucleosidase (Listeria innocua serovar 6a (strain ATCC BAA-680 / CLIP 11262)).